Here is a 267-residue protein sequence, read N- to C-terminus: Phosphate import ATP-binding protein PstB 2 (267 aa).

The ABC transporter domain maps to 21-262 (LATKDLHVYY…AQCQSTNDYV (242 aa)). Residue 53 to 60 (GPSGCGKS) participates in ATP binding.

The protein belongs to the ABC transporter superfamily. Phosphate importer (TC 3.A.1.7) family. The complex is composed of two ATP-binding proteins (PstB), two transmembrane proteins (PstC and PstA) and a solute-binding protein (PstS).

The protein resides in the cell membrane. It catalyses the reaction phosphate(out) + ATP + H2O = ADP + 2 phosphate(in) + H(+). In terms of biological role, part of the ABC transporter complex PstSACB involved in phosphate import. Responsible for energy coupling to the transport system. This chain is Phosphate import ATP-binding protein PstB 2, found in Streptococcus pyogenes serotype M1.